The sequence spans 428 residues: Glutamate-1-semialdehyde 2,1-aminomutase (428 aa).

N6-(pyridoxal phosphate)lysine is present on Lys-265.

This sequence belongs to the class-III pyridoxal-phosphate-dependent aminotransferase family. HemL subfamily. As to quaternary structure, homodimer. It depends on pyridoxal 5'-phosphate as a cofactor.

The protein localises to the cytoplasm. The enzyme catalyses (S)-4-amino-5-oxopentanoate = 5-aminolevulinate. It functions in the pathway porphyrin-containing compound metabolism; protoporphyrin-IX biosynthesis; 5-aminolevulinate from L-glutamyl-tRNA(Glu): step 2/2. The polypeptide is Glutamate-1-semialdehyde 2,1-aminomutase (Hamiltonella defensa subsp. Acyrthosiphon pisum (strain 5AT)).